Consider the following 295-residue polypeptide: Gamma-glutamyl-L-1-hydroxyisopropylamide hydrolase (295 aa).

Residues 5–221 (RILICDGNTE…LRESARSLVE (217 aa)) enclose the Glutamine amidotransferase type-1 domain. Residue cysteine 104 is the Nucleophile of the active site. Active-site residues include histidine 200 and glutamate 202.

It catalyses the reaction gamma-L-glutamyl-L-alaninol + H2O = L-alaninol + L-glutamate. Functionally, involved in the degradation of isopropylamine, which is a constituent of the herbicides atrazine. Catalyzes the hydrolysis of gamma-glutamyl-L-alaninol (GALO) to L-alaninol and L-glutamate. It can also uses gamma-glutamyl-isopropylamide, gamma-glutamyl-ethylamide, L-glutamine, and gamma-glutamyl-p-nitroanilide. This is Gamma-glutamyl-L-1-hydroxyisopropylamide hydrolase (ipuF) from Pseudomonas sp.